A 149-amino-acid chain; its full sequence is 3-hydroxyacyl-[acyl-carrier-protein] dehydratase FabZ (149 aa).

H53 is a catalytic residue.

This sequence belongs to the thioester dehydratase family. FabZ subfamily.

The protein resides in the cytoplasm. It catalyses the reaction a (3R)-hydroxyacyl-[ACP] = a (2E)-enoyl-[ACP] + H2O. Its function is as follows. Involved in unsaturated fatty acids biosynthesis. Catalyzes the dehydration of short chain beta-hydroxyacyl-ACPs and long chain saturated and unsaturated beta-hydroxyacyl-ACPs. The polypeptide is 3-hydroxyacyl-[acyl-carrier-protein] dehydratase FabZ (Neisseria gonorrhoeae (strain ATCC 700825 / FA 1090)).